Reading from the N-terminus, the 407-residue chain is UPF0761 membrane protein AZOSEA40600 (407 aa).

Helical transmembrane passes span 29 to 49 (SLAFTTLLAIVPLLTVIIALF), 92 to 112 (GLTLIGTVLLVLTALMLLMTI), 132 to 152 (LMVHWFALTLGPLALGGSVLA), 174 to 194 (FARLVPTVLLGSLFSVLYYAV), 207 to 227 (GGIAAAIVFVLMQRLFGLFIV), and 239 to 259 (FAVLPIFLVWLYLSWVVILLG).

It belongs to the UPF0761 family.

It localises to the cell inner membrane. The chain is UPF0761 membrane protein AZOSEA40600 from Aromatoleum aromaticum (strain DSM 19018 / LMG 30748 / EbN1) (Azoarcus sp. (strain EbN1)).